A 183-amino-acid chain; its full sequence is Neuronal synaptobrevin (183 aa).

Residues 1–17 show a composition bias toward low complexity; that stretch reads MADAAPAGDAPPNAGAP. A disordered region spans residues 1–32; that stretch reads MADAAPAGDAPPNAGAPAGEGGDGEIVGGPHN. Topologically, residues 1-106 are cytoplasmic; it reads MADAAPAGDA…KFWLQNLKMM (106 aa). A compositionally biased stretch (gly residues) spans 18 to 27; that stretch reads AGEGGDGEIV. Residues 41-101 form the v-SNARE coiled-coil homology domain; it reads RLQQTQAQVD…GKLKRKFWLQ (61 aa). Residues 107–127 form a helical membrane-spanning segment; that stretch reads IIMGVIGLVVVGIIANKLGLI. Over 128–183 the chain is Vesicular; the sequence is GGEQPPQYQYPPQYMQPPPPPPQQPAGGQSSLVDAAGAGDGAGAGGSAGAGDHGGV. The disordered stretch occupies residues 135 to 183; that stretch reads YQYPPQYMQPPPPPPQQPAGGQSSLVDAAGAGDGAGAGGSAGAGDHGGV. The span at 141 to 151 shows a compositional bias: pro residues; sequence YMQPPPPPPQQ. The segment covering 165 to 183 has biased composition (gly residues); sequence AGDGAGAGGSAGAGDHGGV.

This sequence belongs to the synaptobrevin family. In terms of assembly, part of the SNARE core complex containing Snap25 and syntaxin. In terms of tissue distribution, specifically expressed in neurons and synapses.

It localises to the cytoplasmic vesicle. The protein resides in the secretory vesicle. Its subcellular location is the synaptic vesicle membrane. It is found in the early endosome membrane. In terms of biological role, involved in the targeting and/or fusion of transport vesicles to their target membrane. Major SNARE protein of synaptic vesicles which mediates fusion of synaptic vesicles to release neurotransmitters. Essential for fast vesicular exocytosis and activity-dependent neurotransmitter release as well as fast endocytosis that mediates rapid reuse of synaptic vesicles. Also involved in a neuron-specific sort-and-degrade mechanism that promotes endolysosomal degradation and is required for neuronal maintenance. In Drosophila melanogaster (Fruit fly), this protein is Neuronal synaptobrevin.